Here is a 670-residue protein sequence, read N- to C-terminus: Leiomodin-3 (670 aa).

Disordered regions lie at residues 34–72 (EMDDIAPDERVPVGLRQKDASHEMTVRDCTEPESEEEID), 94–120 (EIAPDERVPVGMRQRDQTDKPPTGSFD), 139–165 (EEERVPTTLLPSQKTNEEHEAKNEDKV), and 202–274 (EDKV…NWVP). Basic and acidic residues-rich tracts occupy residues 40 to 63 (PDERVPVGLRQKDASHEMTVRDCT), 97 to 112 (PDERVPVGMRQRDQTD), 153 to 163 (TNEEHEAKNED), 205 to 214 (VCDKPVKTDL), and 249 to 261 (TETKVNEEKKEDS). A coiled-coil region spans residues 150–183 (SQKTNEEHEAKNEDKVEELELVYEEIVEEVEGGQ). Residues 464–494 (DRQRQQRMEEQKLQQMKEQRKVMEMYEDSLN) adopt a coiled-coil conformation. A disordered region spans residues 517–556 (NGAEDIPEDSPEPSPQPSPPHQLCKTQHLAPQQHPPNLST). The region spanning 637 to 656 (PRDHLLSEIRQSNVAYLKAV) is the WH2 domain.

Belongs to the tropomodulin family. Expressed in muscle (at protein level).

It localises to the cytoplasm. The protein localises to the myofibril. The protein resides in the sarcomere. Its subcellular location is the a band. It is found in the m line. It localises to the cytoskeleton. Its function is as follows. Essential for the organization of sarcomeric thin filaments in skeletal muscle. The chain is Leiomodin-3 from Danio rerio (Zebrafish).